We begin with the raw amino-acid sequence, 101 residues long: Small ribosomal subunit protein uS14 (101 aa).

This sequence belongs to the universal ribosomal protein uS14 family. In terms of assembly, part of the 30S ribosomal subunit. Contacts proteins S3 and S10.

Functionally, binds 16S rRNA, required for the assembly of 30S particles and may also be responsible for determining the conformation of the 16S rRNA at the A site. In Dechloromonas aromatica (strain RCB), this protein is Small ribosomal subunit protein uS14.